The chain runs to 369 residues: MDQDALISKEDSEVEREASGGRESLSDVIGFLDAVLSSEPTDIGGDRSWLHNTINTLQRPGSTHRAKGEGEGEVSTSSTQDNRSGEESRVSGGTSEPEAEAHARNVDKQNIHWATGRGASTDSVPQDLGNGRDSGILEDPPNEGGYPRSGAEDENREMAANPDKRGEDQAEGLPEEIRRSAPLPDEGEGRADNNGRGVESGSPHSARVTGVLVIPSPELEEAVLQRNKRRPANSGSRSLTPVVVPSTRSPPPDHDNSTRSPPRKPPTTQDEHTNPRNTPAVRIKDRRPPTGTRSAPDRPTDGYPTHPGPETDATKKGHRREHIIYERDGYIVNESWCNPVCSRIRVISRRELCVCKACPKICKLCRDDI.

2 disordered regions span residues 1-24 (MDQD…GRES) and 38-320 (SEPT…GHRR). The segment covering 7-20 (ISKEDSEVEREASG) has biased composition (basic and acidic residues). Over residues 50–61 (LHNTINTLQRPG) the composition is skewed to polar residues. Composition is skewed to basic and acidic residues over residues 99–110 (AEAHARNVDKQN) and 150–168 (GAED…RGED). Residues S249, S257, and S260 each carry the phosphoserine; by host modification. 8 residues coordinate Zn(2+): H318, C337, C341, C353, C355, C358, C362, and C365.

This sequence belongs to the paramyxoviruses V protein family. In terms of assembly, interacts with host IFIH1/MDA5 and DHX58/LGP2. Interacts with host IRF3. Interacts with host RIGI regulatory protein (via CARDs domain) and host TRIM25 (via SPRY domain); these interactions prevent TRIM25-mediated ubiquitination of RIG-I and disrupts downstream RIG-I signaling.

Its subcellular location is the host cytoplasm. Functionally, plays an essential role in the inhibition of host immune response. Prevents the establishment of cellular antiviral state by blocking interferon-alpha/beta (IFN-alpha/beta) production and signaling pathway. Interacts with host IFIH1/MDA5 and DHX58/LGP2 to inhibit the transduction pathway involved in the activation of IFN-beta promoter, thus protecting the virus against cell antiviral state. Also interacts with and inhibits host IRF3. Blocks the type I interferon signaling pathway by disrupting the RIG-I signaling pathway. The protein is Protein V (P/V/C) of Sendai virus (strain Hamamatsu) (SeV).